A 122-amino-acid polypeptide reads, in one-letter code: Fluoride-specific ion channel FluC (122 aa).

Helical transmembrane passes span 5–25 (FLIGIGGFTGAVLRYVISGII), 29–49 (FGIPTGTLMVNLIGSFIVGFL), 65–85 (FIITGFCGALTTFSTFSYESF), and 93–113 (FIKSGINILTNVTGCISMIYF). Gly72 and Thr75 together coordinate Na(+).

The protein belongs to the fluoride channel Fluc/FEX (TC 1.A.43) family.

Its subcellular location is the cell membrane. It catalyses the reaction fluoride(in) = fluoride(out). Na(+) is not transported, but it plays an essential structural role and its presence is essential for fluoride channel function. In terms of biological role, fluoride-specific ion channel. Important for reducing fluoride concentration in the cell, thus reducing its toxicity. The polypeptide is Fluoride-specific ion channel FluC (Methanococcus vannielii (strain ATCC 35089 / DSM 1224 / JCM 13029 / OCM 148 / SB)).